Reading from the N-terminus, the 445-residue chain is Argininosuccinate synthase (445 aa).

ATP-binding positions include Ala17–Ser25 and Ala43. Tyr99 serves as a coordination point for L-citrulline. Residues Gly129 and Thr131 each contribute to the ATP site. Residues Thr131, Asn135, and Asp136 each contribute to the L-aspartate site. Asn135 contacts L-citrulline. Asp136 serves as a coordination point for ATP. The L-citrulline site is built by Arg139 and Ser192. Asp194 serves as a coordination point for ATP. L-citrulline contacts are provided by Thr201, Glu203, and Glu280.

Belongs to the argininosuccinate synthase family. Type 2 subfamily. In terms of assembly, homotetramer.

The protein localises to the cytoplasm. The catalysed reaction is L-citrulline + L-aspartate + ATP = 2-(N(omega)-L-arginino)succinate + AMP + diphosphate + H(+). It functions in the pathway amino-acid biosynthesis; L-arginine biosynthesis; L-arginine from L-ornithine and carbamoyl phosphate: step 2/3. This is Argininosuccinate synthase (argG) from Bradyrhizobium diazoefficiens (strain JCM 10833 / BCRC 13528 / IAM 13628 / NBRC 14792 / USDA 110).